The sequence spans 570 residues: Probable D-xylulose kinase A (570 aa).

Residues His95, Arg166, Asp282, and Asn283 each contribute to the substrate site. ATP contacts are provided by residues Trp364, 469-470, and Asn473; that span reads GG.

It belongs to the FGGY kinase family.

The protein resides in the cytoplasm. The catalysed reaction is D-xylulose + ATP = D-xylulose 5-phosphate + ADP + H(+). Highly specific D-xylulose kinase which participates in the catabolism of xylose. Xylose is a major component of hemicelluloses such as xylan. Most fungi utilize D-xylose via three enzymatic reactions, xylose reductase (XR), xylitol dehydrogenase (XDH), and xylulokinase, to form xylulose 5-phosphate, which enters pentose phosphate pathway. The chain is Probable D-xylulose kinase A (xkiA) from Aspergillus niger (strain ATCC MYA-4892 / CBS 513.88 / FGSC A1513).